Consider the following 480-residue polypeptide: Cytochrome P450 monooxygenase ORF11 (480 aa).

Residues 9-29 form a helical membrane-spanning segment; the sequence is LLLLPHLSALTPKTGFLIGLA. N-linked (GlcNAc...) asparagine glycosylation is found at Asn-265 and Asn-352. Cys-449 lines the heme pocket.

It belongs to the cytochrome P450 family. Requires heme as cofactor.

The protein localises to the membrane. It functions in the pathway sesquiterpene biosynthesis. In terms of biological role, cytochrome P450 monooxygenase; part of the gene cluster that mediates the biosynthesis of PR-toxin, a bicyclic sesquiterpene belonging to the eremophilane class and acting as a mycotoxin. The first step of the pathway is catalyzed by the aristolochene synthase which performs the cyclization of trans,trans-farnesyl diphosphate (FPP) to the bicyclic sesquiterpene aristolochene. Following the formation of aristolochene, the non-oxygenated aristolochene is converted to the trioxygenated intermediate eremofortin B, via 7-epi-neopetasone. This conversion appears to involve three enzymes, a hydroxysterol oxidase-like enzyme, the quinone-oxidase prx3 that forms the quinone-type-structure in the bicyclic nucleus of aristolochene with the C8-oxo group and the C-3 hydroxyl group, and the P450 monooxygenase ORF6 that introduces the epoxide at the double bond between carbons 1 and 2. No monoxy or dioxy-intermediates have been reported to be released to the broth, so these three early oxidative reactions may be coupled together. Eremofortin B is further oxidized by another P450 monooxygenase, that introduces a second epoxide between carbons 7 and 11 prior to acetylation to eremofortin A by the acetyltransferase ORF8. The second epoxidation may be performed by a second P450 monooxygenase. After the acetylation step, eremofortin A is converted to eremofortin C and then to PR-toxin. First the conversion of eremofortin A to eremofortin C proceeds by oxidation of the side chain of the molecule at C-12 and is catalyzed by the short-chain oxidoreductase prx1. The cytochrome P450 monooxygenase ORF6 is probably also involved in this step. The primary alcohol formed at C-12 is finally oxidized by the short-chain alcohol dehydrogenase prx4 that forms PR-toxin. The protein is Cytochrome P450 monooxygenase ORF11 of Penicillium roqueforti (strain FM164).